A 245-amino-acid chain; its full sequence is Malonyl-[acyl-carrier protein] O-methyltransferase (245 aa).

The protein belongs to the methyltransferase superfamily.

It carries out the reaction malonyl-[ACP] + S-adenosyl-L-methionine = malonyl-[ACP] methyl ester + S-adenosyl-L-homocysteine. It participates in cofactor biosynthesis; biotin biosynthesis. Converts the free carboxyl group of a malonyl-thioester to its methyl ester by transfer of a methyl group from S-adenosyl-L-methionine (SAM). It allows to synthesize pimeloyl-ACP via the fatty acid synthetic pathway. The sequence is that of Malonyl-[acyl-carrier protein] O-methyltransferase from Calditerrivibrio nitroreducens (strain DSM 19672 / NBRC 101217 / Yu37-1).